The sequence spans 394 residues: Protein LAX PANICLE 2 (394 aa).

Residues 1-193 (MVPARSLAHP…PTPRHHHHDV (193 aa)) form a disordered region. Positions 8-20 (AHPHPHLVRRRRD) are enriched in basic residues. Residues 60–84 (QHDPPKQPPPREADDDHHRIQEREP) show a composition bias toward basic and acidic residues. 3 stretches are compositionally biased toward low complexity: residues 90-101 (TTTRNQRLQLQL), 119-131 (GTSG…SSSN), and 146-155 (GPASPGASAG). The span at 170–185 (APQPPTPTPTPTPTPT) shows a compositional bias: pro residues.

As to quaternary structure, interacts with LAX1.

Its subcellular location is the nucleus. Functionally, involved in the regulation of shoot branching by controlling axillary meristem (AM) formation. Functions in association with LAX1 to regulate the process of AM formation. Possesses transactivation activity in yeast. The sequence is that of Protein LAX PANICLE 2 from Oryza sativa subsp. japonica (Rice).